The sequence spans 227 residues: MSSRDSAASEITPEVLLRAYACGIFPMAESADDPGLFWVEPEQRGIFPLEALRISSRLARTVRSDRYRITIDTAFERVLGECAAPAPGREDTWINNRIRKLYSGLFEIGHCHSIEAWDGDDLAGGLYGVSLGGAFFGESMFHRSRDTSKVALVHLAARLIIGGFTLLDTQFVTDHLRSLGATEVPRRKYRALLDRALQLPGDFFALPADRPVSGADVLAIVRGTTAT.

This sequence belongs to the L/F-transferase family.

Its subcellular location is the cytoplasm. It catalyses the reaction N-terminal L-lysyl-[protein] + L-leucyl-tRNA(Leu) = N-terminal L-leucyl-L-lysyl-[protein] + tRNA(Leu) + H(+). It carries out the reaction N-terminal L-arginyl-[protein] + L-leucyl-tRNA(Leu) = N-terminal L-leucyl-L-arginyl-[protein] + tRNA(Leu) + H(+). The catalysed reaction is L-phenylalanyl-tRNA(Phe) + an N-terminal L-alpha-aminoacyl-[protein] = an N-terminal L-phenylalanyl-L-alpha-aminoacyl-[protein] + tRNA(Phe). In terms of biological role, functions in the N-end rule pathway of protein degradation where it conjugates Leu, Phe and, less efficiently, Met from aminoacyl-tRNAs to the N-termini of proteins containing an N-terminal arginine or lysine. This is Leucyl/phenylalanyl-tRNA--protein transferase from Afipia carboxidovorans (strain ATCC 49405 / DSM 1227 / KCTC 32145 / OM5) (Oligotropha carboxidovorans).